Consider the following 30-residue polypeptide: Ampulexin 3 (30 aa).

The signal sequence occupies residues 1-17 (MKAIMVLFYVMTLTIIG).

Monomer. Expressed in venom sac and, to a lesser extent, in venom gland. Not expressed in brain.

Its subcellular location is the secreted. The polypeptide is Ampulexin 3 (Ampulex compressa (Emerald cockroach wasp)).